The following is a 4965-amino-acid chain: Auxin transport protein BIG (4965 aa).

3 helical membrane-spanning segments follow: residues 289-309 (SDIC…IFSP), 646-666 (ACLA…AYEV), and 772-792 (LFLI…YEGL). Residues 1383–1425 (TNQESNSTVDCDASSGEEDEDDGTSDGELVSIDRDEEEDGNSE) form a disordered region. Positions 1397–1407 (SGEEDEDDGTS) are enriched in acidic residues. The UBR-type zinc-finger motif lies at 1431–1502 (KVCTFTSSGS…RGSSCQCLKP (72 aa)). The tract at residues 2437–2456 (DDAPDNHAKASAASNSTTGN) is disordered. Positions 2445 to 2456 (KASAASNSTTGN) are enriched in low complexity. Residues 2469–2528 (SVQYCCDGCSTVPILRRRWHCNICPDFDLCETCYEILDADRLPAPHSRDHPMSAIPIELD) form a ZZ-type zinc finger. Residues Cys-2474, Cys-2477, Cys-2489, Cys-2492, Cys-2498, Cys-2501, His-2514, and His-2518 each contribute to the Zn(2+) site. The interval 2997–3037 (NAQKTESGDIGSSTRTGSQSSDSKKKRKGDDSSEGSSEKSC) is disordered. Low complexity predominate over residues 3007–3017 (GSSTRTGSQSS). A compositionally biased stretch (basic and acidic residues) spans 3024 to 3037 (KGDDSSEGSSEKSC). The MYND-type; degenerate zinc-finger motif lies at 3319–3359 (CPRCSRSVTDKHGICSNCHENAYQCRQCRNINYENLDSFLC). Residues 3672–3721 (PKSDSGEKEPGMGKSSLMQAKNDDTVGHSVTNLSTSKTQSELSGKIPDGS) are disordered. The segment covering 3699 to 3713 (HSVTNLSTSKTQSEL) has biased composition (polar residues). Positions 4433 to 4963 (PSIPLILSML…DFVRAIIHGA (531 aa)) are UBR4 E3 catalytic module. A HemiRING-type zinc finger spans residues 4562 to 4681 (GLACMVCREG…WDQLNSLGRA (120 aa)). Zn(2+)-binding residues include Cys-4565, Cys-4568, His-4615, and Cys-4618. Residues 4684 to 4963 (SRLRLLTYDI…DFVRAIIHGA (280 aa)) form the UZI domain. Over residues 4753–4770 (SSSPSTPESPVRLSALSG) the composition is skewed to low complexity. Disordered stretches follow at residues 4753 to 4778 (SSSP…SGSS) and 4822 to 4846 (STLK…ADSN). The segment covering 4824–4845 (LKLSADTSSSAVRSDEGSSADS) has biased composition (polar residues).

Belongs to the UBR4 family.

It is found in the membrane. Its function is as follows. Required for auxin efflux and polar auxin transport (PAT) influencing auxin-mediated developmental responses (e.g. cell elongation, apical dominance, lateral root production, inflorescence architecture, general growth and development). The polypeptide is Auxin transport protein BIG (Oryza sativa subsp. japonica (Rice)).